The chain runs to 256 residues: Imidazole glycerol phosphate synthase subunit HisF (256 aa).

Active-site residues include Asp-11 and Asp-130.

This sequence belongs to the HisA/HisF family. As to quaternary structure, heterodimer of HisH and HisF.

The protein localises to the cytoplasm. It carries out the reaction 5-[(5-phospho-1-deoxy-D-ribulos-1-ylimino)methylamino]-1-(5-phospho-beta-D-ribosyl)imidazole-4-carboxamide + L-glutamine = D-erythro-1-(imidazol-4-yl)glycerol 3-phosphate + 5-amino-1-(5-phospho-beta-D-ribosyl)imidazole-4-carboxamide + L-glutamate + H(+). Its pathway is amino-acid biosynthesis; L-histidine biosynthesis; L-histidine from 5-phospho-alpha-D-ribose 1-diphosphate: step 5/9. In terms of biological role, IGPS catalyzes the conversion of PRFAR and glutamine to IGP, AICAR and glutamate. The HisF subunit catalyzes the cyclization activity that produces IGP and AICAR from PRFAR using the ammonia provided by the HisH subunit. The polypeptide is Imidazole glycerol phosphate synthase subunit HisF (Synechococcus sp. (strain CC9605)).